The following is a 425-amino-acid chain: Tryptophan synthase beta chain (425 aa).

Lys-107 carries the N6-(pyridoxal phosphate)lysine modification.

It belongs to the TrpB family. Tetramer of two alpha and two beta chains. Pyridoxal 5'-phosphate serves as cofactor.

The enzyme catalyses (1S,2R)-1-C-(indol-3-yl)glycerol 3-phosphate + L-serine = D-glyceraldehyde 3-phosphate + L-tryptophan + H2O. Its pathway is amino-acid biosynthesis; L-tryptophan biosynthesis; L-tryptophan from chorismate: step 5/5. The beta subunit is responsible for the synthesis of L-tryptophan from indole and L-serine. In Synechococcus sp. (strain JA-2-3B'a(2-13)) (Cyanobacteria bacterium Yellowstone B-Prime), this protein is Tryptophan synthase beta chain.